The following is a 297-amino-acid chain: Ribosomal RNA small subunit methyltransferase H (297 aa).

Residues 37–39 (GGH), Glu-56, Phe-87, Asp-102, and His-109 contribute to the S-adenosyl-L-methionine site.

It belongs to the methyltransferase superfamily. RsmH family.

Its subcellular location is the cytoplasm. The enzyme catalyses cytidine(1402) in 16S rRNA + S-adenosyl-L-methionine = N(4)-methylcytidine(1402) in 16S rRNA + S-adenosyl-L-homocysteine + H(+). Functionally, specifically methylates the N4 position of cytidine in position 1402 (C1402) of 16S rRNA. The chain is Ribosomal RNA small subunit methyltransferase H from Borrelia recurrentis (strain A1).